The chain runs to 694 residues: Elongation factor G (694 aa).

In terms of domain architecture, tr-type G spans 8–282 (DRLRNIGIMA…AIVDYLPSPL (275 aa)). Residues 17 to 24 (AHIDAGKT), 81 to 85 (DTPGH), and 135 to 138 (NKMD) contribute to the GTP site. The segment at 284–303 (IPPVQGTDPETGEPAERKAD) is disordered.

It belongs to the TRAFAC class translation factor GTPase superfamily. Classic translation factor GTPase family. EF-G/EF-2 subfamily.

The protein localises to the cytoplasm. Its function is as follows. Catalyzes the GTP-dependent ribosomal translocation step during translation elongation. During this step, the ribosome changes from the pre-translocational (PRE) to the post-translocational (POST) state as the newly formed A-site-bound peptidyl-tRNA and P-site-bound deacylated tRNA move to the P and E sites, respectively. Catalyzes the coordinated movement of the two tRNA molecules, the mRNA and conformational changes in the ribosome. This chain is Elongation factor G, found in Symbiobacterium thermophilum (strain DSM 24528 / JCM 14929 / IAM 14863 / T).